The chain runs to 557 residues: 2-isopropylmalate synthase (557 aa).

Positions 33–307 (PIWCSSDLRD…DPQLDFSDID (275 aa)) constitute a Pyruvate carboxyltransferase domain. The Mg(2+) site is built by D42, H246, H248, and N282. The regulatory domain stretch occupies residues 439–557 (ANSPYALVSH…SLSQQEAKAA (119 aa)).

Belongs to the alpha-IPM synthase/homocitrate synthase family. LeuA type 2 subfamily. In terms of assembly, homodimer. Mg(2+) serves as cofactor.

The protein resides in the cytoplasm. It catalyses the reaction 3-methyl-2-oxobutanoate + acetyl-CoA + H2O = (2S)-2-isopropylmalate + CoA + H(+). The protein operates within amino-acid biosynthesis; L-leucine biosynthesis; L-leucine from 3-methyl-2-oxobutanoate: step 1/4. Functionally, catalyzes the condensation of the acetyl group of acetyl-CoA with 3-methyl-2-oxobutanoate (2-ketoisovalerate) to form 3-carboxy-3-hydroxy-4-methylpentanoate (2-isopropylmalate). The polypeptide is 2-isopropylmalate synthase (Pseudomonas putida (strain W619)).